The chain runs to 78 residues: DNA-directed RNA polymerase subunit Rpo5 (78 aa).

This sequence belongs to the archaeal Rpo5/eukaryotic RPB5 RNA polymerase subunit family. Part of the RNA polymerase complex.

It localises to the cytoplasm. It catalyses the reaction RNA(n) + a ribonucleoside 5'-triphosphate = RNA(n+1) + diphosphate. DNA-dependent RNA polymerase (RNAP) catalyzes the transcription of DNA into RNA using the four ribonucleoside triphosphates as substrates. In Methanosarcina barkeri (strain Fusaro / DSM 804), this protein is DNA-directed RNA polymerase subunit Rpo5.